A 293-amino-acid chain; its full sequence is Cyclohexadienyl dehydrogenase (293 aa).

One can recognise a Prephenate/arogenate dehydrogenase domain in the interval 5 to 293 (KHIAIIGLGL…ALKTDHDIRP (289 aa)). 6–30 (HIAIIGLGLIGSSAARATKAYCPDV) lines the NAD(+) pocket.

The protein belongs to the prephenate/arogenate dehydrogenase family. As to quaternary structure, homodimer.

It catalyses the reaction L-arogenate + NAD(+) = L-tyrosine + CO2 + NADH. The catalysed reaction is prephenate + NAD(+) = 3-(4-hydroxyphenyl)pyruvate + CO2 + NADH. It participates in amino-acid biosynthesis; L-tyrosine biosynthesis; (4-hydroxyphenyl)pyruvate from prephenate (NAD(+) route): step 1/1. Its pathway is amino-acid biosynthesis; L-tyrosine biosynthesis; L-tyrosine from L-arogenate (NAD(+) route): step 1/1. With respect to regulation, insensitive to feedback inhibition by L-tyrosine. In terms of biological role, can function as either prephenate dehydrogenase or as arogenate dehydrogenase in the biosynthesis of L-tyrosine. Catalyzes two analogous reactions: converts prephenate to 4-hydroxyphenylpyruvate and transforms L-arogenate to L-tyrosine. Is not able to utilize NADP(+) instead of NAD(+) as cosubstrate. The sequence is that of Cyclohexadienyl dehydrogenase from Zymomonas mobilis subsp. mobilis (strain ATCC 31821 / ZM4 / CP4).